Here is a 454-residue protein sequence, read N- to C-terminus: Chromosomal replication initiator protein DnaA (454 aa).

Positions 1–74 (MFDLEKFWDS…IQSAYAYAGI (74 aa)) are domain I, interacts with DnaA modulators. The tract at residues 74–116 (IDIYPVFVVKNGPTPSSERMLEPQPQAKPEKARPQGREFTKDL) is domain II. The disordered stretch occupies residues 88 to 112 (PSSERMLEPQPQAKPEKARPQGREF). Positions 101 to 112 (KPEKARPQGREF) are enriched in basic and acidic residues. Positions 117 to 333 (RLNEKYTFEN…GALVKVQAQA (217 aa)) are domain III, AAA+ region. Residues Gly161, Gly163, Lys164, and Thr165 each contribute to the ATP site. Positions 334 to 454 (TIQKQDINIG…VSDLRQMLER (121 aa)) are domain IV, binds dsDNA.

The protein belongs to the DnaA family. In terms of assembly, oligomerizes as a right-handed, spiral filament on DNA at oriC.

It is found in the cytoplasm. Its function is as follows. Plays an essential role in the initiation and regulation of chromosomal replication. ATP-DnaA binds to the origin of replication (oriC) to initiate formation of the DNA replication initiation complex once per cell cycle. Binds the DnaA box (a 9 base pair repeat at the origin) and separates the double-stranded (ds)DNA. Forms a right-handed helical filament on oriC DNA; dsDNA binds to the exterior of the filament while single-stranded (ss)DNA is stabiized in the filament's interior. The ATP-DnaA-oriC complex binds and stabilizes one strand of the AT-rich DNA unwinding element (DUE), permitting loading of DNA polymerase. After initiation quickly degrades to an ADP-DnaA complex that is not apt for DNA replication. Binds acidic phospholipids. The polypeptide is Chromosomal replication initiator protein DnaA (Lactobacillus delbrueckii subsp. bulgaricus (strain ATCC 11842 / DSM 20081 / BCRC 10696 / JCM 1002 / NBRC 13953 / NCIMB 11778 / NCTC 12712 / WDCM 00102 / Lb 14)).